The following is a 386-amino-acid chain: Caspase-1-A (386 aa).

Residues 1–100 constitute a propeptide that is removed on maturation; that stretch reads MTAQLNKVRR…PPMAPVPIQE (100 aa). The CARD domain occupies 22–88; it reads SDLLDDLREK…HKTLAKSLGL (67 aa). Catalysis depends on residues His-218 and Cys-274. A propeptide spanning residues 287–296 is cleaved from the precursor; that stretch reads DVASPPLEDD.

The protein belongs to the peptidase C14A family. Heterotetramer that consists of two anti-parallel arranged heterodimers, each one formed by a 20 kDa (Caspase-1 subunit p20) and a 10 kDa (Caspase-1 subunit p10) subunit. As to quaternary structure, heterotetramer that consists of two anti-parallel arranged heterodimers, each one formed by a 20 kDa (Caspase-1 subunit p20) and a 10 kDa (Caspase-1 subunit p10) subunit. Can form a heterodimer with isoform epsilon which then has an inhibitory effect. In terms of processing, the two subunits are derived from the precursor sequence by an autocatalytic mechanism.

It is found in the cytoplasm. It localises to the cell membrane. The enzyme catalyses Strict requirement for an Asp residue at position P1 and has a preferred cleavage sequence of Tyr-Val-Ala-Asp-|-.. In terms of biological role, thiol protease involved in a variety of inflammatory processes by proteolytically cleaving other proteins, such as the precursors of the inflammatory cytokines interleukin-1 beta (IL1B) and interleukin 18 (IL18) as well as the pyroptosis inducer Gasdermin-D (GSDMD), into active mature peptides. Plays a key role in cell immunity as an inflammatory response initiator: once activated through formation of an inflammasome complex, it initiates a pro-inflammatory response through the cleavage of the two inflammatory cytokines IL1B and IL18, releasing the mature cytokines which are involved in a variety of inflammatory processes. Cleaves a tetrapeptide after an Asp residue at position P1. Also initiates pyroptosis, a programmed lytic cell death pathway, through cleavage of GSDMD. This is Caspase-1-A (casp1-a) from Xenopus laevis (African clawed frog).